Consider the following 148-residue polypeptide: Protein SprT-like (148 aa).

Residues 6 to 147 enclose the SprT-like domain; that stretch reads LQQLVATISM…CGRCQGPIKL (142 aa). Residue His67 coordinates Zn(2+). Glu68 is an active-site residue. His71 provides a ligand contact to Zn(2+).

Belongs to the SprT family. Requires Zn(2+) as cofactor.

It is found in the cytoplasm. The chain is Protein SprT-like from Lactiplantibacillus plantarum (strain ATCC BAA-793 / NCIMB 8826 / WCFS1) (Lactobacillus plantarum).